The primary structure comprises 505 residues: E3 SUMO-protein ligase PIAS4-A (505 aa).

The region spanning 12 to 46 (VKSFRVSDLQTLLASMGRSKSGLKQDLVGRALRLV) is the SAP domain. The short motif at 20–24 (LQTLL) is the LXXLL motif element. K35 participates in a covalent cross-link: Glycyl lysine isopeptide (Lys-Gly) (interchain with G-Cter in SUMO); alternate. K35 participates in a covalent cross-link: Glycyl lysine isopeptide (Lys-Gly) (interchain with G-Cter in SUMO2); alternate. Residues K56 and K68 each participate in a glycyl lysine isopeptide (Lys-Gly) (interchain with G-Cter in SUMO2) cross-link. In terms of domain architecture, PINIT spans 104 to 264 (GIPKPAPPPA…SVAVYLVRVF (161 aa)). The SP-RING-type zinc finger occupies 296-381 (PESEIATTGL…LKETPEDVEE (86 aa)). 4 residues coordinate Zn(2+): C327, H329, C350, and C353. Positions 374 to 505 (ETPEDVEEIE…DYDKDLVTAY (132 aa)) are required for nuclear localization. Over residues 395-407 (DDKEKERERENSR) the composition is skewed to basic and acidic residues. The disordered stretch occupies residues 395 to 505 (DDKEKERERE…DYDKDLVTAY (111 aa)). Residues 437 to 457 (SGSGGASAGTGSTSGGSGGGT) are compositionally biased toward gly residues. The span at 462–485 (TLDDSSEEEGGGGAEDSEETDDSQ) shows a compositional bias: acidic residues. The span at 493-505 (GRYDYDKDLVTAY) shows a compositional bias: basic and acidic residues.

It belongs to the PIAS family. Post-translationally, sumoylated. Lys-35 is the main site of sumoylation. As to expression, highly expressed in spleen, liver, and brain. Expressed at lower levels in heart, intestine, kidney, gill, skin, and muscle.

The protein resides in the nucleus. It carries out the reaction S-ubiquitinyl-[E2 ubiquitin-conjugating enzyme]-L-cysteine + [acceptor protein]-L-lysine = [E2 ubiquitin-conjugating enzyme]-L-cysteine + N(6)-ubiquitinyl-[acceptor protein]-L-lysine.. It participates in protein modification; protein sumoylation. Functions as an E3-type small ubiquitin-like modifier (SUMO) ligase. May play a role as a transcriptional coregulator in various cellular pathways. Catalyzes conjugation of SUMO2 to KAT5 in response to DNA damage, facilitating repair of DNA double-strand breaks (DSBs) via homologous recombination (HR). Mediates sumoylation of PARP1 in response to PARP1 trapping to chromatin. Negatively regulates induction of interferon phi 1 (ifnphi1) mediated by mavs and ticam1/trif. Also inhibits ifnphi1-mediated activation of the interferon-stimulated genes (ISGs) pkz and cd40, and to a lesser extent rsad2 and isg15. May inhibit ticam1/trif-mediated activation of NF-kappa-B. This is E3 SUMO-protein ligase PIAS4-A from Danio rerio (Zebrafish).